We begin with the raw amino-acid sequence, 447 residues long: MTTFFSLTTAAAVLTLARGSNALVRPGNVGKLPALGWNTWNAFGCDIDATKIMTAANEVVNLGLKDLGYEYINIDDCWSVKSGRDASTQRIIPDPDKFPDGISGVADQIHDLGLKIGIYSSAGLTTCAGYPASLGYEDIDAQTFAEWGIDYLKYDNCGVPSNWTDTYTYCVPDPGSKATNGTCPDNKNPAPAGYDWRTSLTAERYRRMRDALVSVDRTILYSLCEWGQANVNDWGNETGNSWRTTGDITPSWPRIAAIANENSFLMNHVDFWGYPDPDMLEVGNGNLTLAENRAHFALWAAMKSPLIIGTALDSISQDHLAILSNKILLKFHQDPVIGRPAQPYKWGYNPDWTFDPAHPAEYWSGASSVLGGTLVLMLNSEDTTQRRTAVWKEVPELKDVLGRQGKRRIGFRVTDVWTGKDLGCVRDHYSVELESHDVAALVVGRAC.

Positions 1–25 (MTTFFSLTTAAAVLTLARGSNALVR) are cleaved as a signal peptide. Disulfide bonds link C45/C77 and C127/C157. D155 acts as the Nucleophile in catalysis. 2 N-linked (GlcNAc...) asparagine glycosylation sites follow: N162 and N180. A substrate-binding site is contributed by 225 to 229 (EWGQA). Residue N236 is glycosylated (N-linked (GlcNAc...) asparagine). D247 functions as the Proton donor in the catalytic mechanism. An N-linked (GlcNAc...) asparagine glycan is attached at N286.

It belongs to the glycosyl hydrolase 27 family.

It localises to the secreted. It carries out the reaction Hydrolysis of terminal, non-reducing alpha-D-galactose residues in alpha-D-galactosides, including galactose oligosaccharides, galactomannans and galactolipids.. In terms of biological role, hydrolyzes a variety of simple alpha-D-galactoside as well as more complex molecules such as oligosaccharides and polysaccharides. The sequence is that of Probable alpha-galactosidase B (aglB) from Aspergillus fumigatus (strain ATCC MYA-4609 / CBS 101355 / FGSC A1100 / Af293) (Neosartorya fumigata).